Reading from the N-terminus, the 418-residue chain is Protein SSXT (418 aa).

S2 carries the N-acetylserine modification. Positions S2 to P186 are transcriptional activation. An SH2-binding motif is present at residues Y50–M53. Disordered stretches follow at residues A77–H118 and G188–Q418. The span at Y225–P251 shows a compositional bias: low complexity. A compositionally biased stretch (basic and acidic residues) spans G309–S318. Composition is skewed to low complexity over residues Q328 to Q337, Y345 to G366, and Y376 to T393. Repeat copies occupy residues G344–Q356 and G357–Q369. The 2 X 13 AA imperfect tandem repeats stretch occupies residues G344–Q369. The short motif at P374–P377 is the SH2-binding element. The SH3-binding motif lies at P392–P401. Pro residues predominate over residues Q394–Q403. The segment covering R404–Q418 has biased composition (low complexity). Residues Y413–Y416 carry the SH2-binding motif.

It belongs to the SS18 family. As to quaternary structure, interacts with MLLT10. Isoform 1 interacts with RBM14 isoform 1. Isoform 2 interacts with RBM14 isoform 1. Component of the multiprotein chromatin-remodeling complexes SWI/SNF: SWI/SNF-A (BAF), SWI/SNF-B (PBAF) and related complexes. The canonical complex contains a catalytic subunit (either SMARCA4/BRG1/BAF190A or SMARCA2/BRM/BAF190B) and at least SMARCE1, ACTL6A/BAF53, SMARCC1/BAF155, SMARCC2/BAF170, and SMARCB1/SNF5/BAF47. Other subunits specific to each of the complexes may also be present permitting several possible combinations developmentally and tissue specific. Component of the SWI/SNF (GBAF) subcomplex, which includes at least BICRA or BICRAL (mutually exclusive), BRD9, SS18, the core BAF subunits, SMARCA2/BRM, SMARCA4/BRG1/BAF190A, ACTL6A/BAF53, SMARCC1/BAF155, and SMARCD1/BAF60A. As to expression, fairly ubiquitously expressed. Expressed in synovial sarcomas and in other human cell lines. The fusion genes SSXT-SSX1 and SSXT-SSX2 are expressed only in synovial sarcomas.

Its subcellular location is the nucleus. Its function is as follows. Appears to function synergistically with RBM14 as a transcriptional coactivator. Isoform 1 and isoform 2 function in nuclear receptor coactivation. Isoform 1 and isoform 2 function in general transcriptional coactivation. Component of SWI/SNF chromatin remodeling subcomplex GBAF that carries out key enzymatic activities, changing chromatin structure by altering DNA-histone contacts within a nucleosome in an ATP-dependent manner. This is Protein SSXT (SS18) from Homo sapiens (Human).